The sequence spans 1097 residues: DNA-directed RNA polymerase subunit beta (1097 aa).

The disordered stretch occupies residues 1071–1097; it reads MQDVNPKRNTPSRPTYESLGTSEYAED. Over residues 1077–1091 the composition is skewed to polar residues; it reads KRNTPSRPTYESLGT.

It belongs to the RNA polymerase beta chain family. In terms of assembly, in cyanobacteria the RNAP catalytic core is composed of 2 alpha, 1 beta, 1 beta', 1 gamma and 1 omega subunit. When a sigma factor is associated with the core the holoenzyme is formed, which can initiate transcription.

It carries out the reaction RNA(n) + a ribonucleoside 5'-triphosphate = RNA(n+1) + diphosphate. Functionally, DNA-dependent RNA polymerase catalyzes the transcription of DNA into RNA using the four ribonucleoside triphosphates as substrates. The protein is DNA-directed RNA polymerase subunit beta of Prochlorococcus marinus subsp. pastoris (strain CCMP1986 / NIES-2087 / MED4).